The primary structure comprises 490 residues: Betaine aldehyde dehydrogenase (490 aa).

3 residues coordinate K(+): T26, I27, and D93. 150–152 (GAW) contributes to the NAD(+) binding site. K162 (charge relay system) is an active-site residue. 176-179 (KPSE) is a binding site for NAD(+). V180 provides a ligand contact to K(+). 230-233 (GVAS) is an NAD(+) binding site. Position 246 (L246) interacts with K(+). E252 functions as the Proton acceptor in the catalytic mechanism. NAD(+)-binding residues include G254, C286, and E387. The active-site Nucleophile is the C286. The residue at position 286 (C286) is a Cysteine sulfenic acid (-SOH). K(+) contacts are provided by K457 and G460. The active-site Charge relay system is E464.

It belongs to the aldehyde dehydrogenase family. In terms of assembly, dimer of dimers. Requires K(+) as cofactor.

It carries out the reaction betaine aldehyde + NAD(+) + H2O = glycine betaine + NADH + 2 H(+). Its pathway is amine and polyamine biosynthesis; betaine biosynthesis via choline pathway; betaine from betaine aldehyde: step 1/1. Involved in the biosynthesis of the osmoprotectant glycine betaine. Catalyzes the irreversible oxidation of betaine aldehyde to the corresponding acid. The sequence is that of Betaine aldehyde dehydrogenase from Escherichia coli O7:K1 (strain IAI39 / ExPEC).